The primary structure comprises 619 residues: Calnexin (619 aa).

Positions 1–21 are cleaved as a signal peptide; that stretch reads MVNRKWMYIFIQFLLVSSIRS. Asp-109 serves as a coordination point for Ca(2+). An intrachain disulfide couples Cys-152 to Cys-186. Residues Tyr-156, Lys-158, Tyr-177, and Asp-184 each coordinate an alpha-D-glucoside. N-linked (GlcNAc...) asparagine glycosylation is present at Asn-203. A p domain (Extended arm) region spans residues 268–401; it reads IFDETDLKPV…RLIDNPNYFE (134 aa). 5 repeat units span residues 270–282, 287–299, 306–318, 325–337, and 340–350. 4 X approximate repeats regions lie at residues 270–337 and 340–397; these read DETD…WDED and GSWE…IDNP. Cys-352 and Cys-358 form a disulfide bridge. Tandem repeats lie at residues 359-369, 373-383, and 387-397. An an alpha-D-glucoside-binding site is contributed by Glu-417. Asp-428 is a binding site for Ca(2+). The helical transmembrane segment at 481–501 threads the bilayer; sequence LWAVYILCVLLPLVAIGVFCF. Residues 538-619 are disordered; sequence GDEEDDVNQP…AKRRTARRGD (82 aa). Residues 547–557 are compositionally biased toward polar residues; the sequence is PGPSGSQSNPE. A compositionally biased stretch (low complexity) spans 566-577; it reads EQQSANSSQSSA. A glycan (N-linked (GlcNAc...) asparagine) is linked at Asn-571. The span at 585–601 shows a compositional bias: basic and acidic residues; that stretch reads HVVPENEPVKPTEEFAK. The segment covering 610-619 has biased composition (basic residues); sequence AKRRTARRGD.

This sequence belongs to the calreticulin family. Glycosylation is important for its biological activity. Expressed ubiquitously in every blastomere of the embryo up to the gastrulation stage. Expression becomes gradually restricted to the head and tail regions at the comma stage during embryogenesis. During postembryonic development, expressed prominently in the H-shaped excretory cell, in the neurons of head (including ASK and ADL) and tail (including PHA and PHB), in the dorsal and ventral nerve cords, and in the spermatheca. Expressed in the spicules of the male tail (at protein level).

It localises to the endoplasmic reticulum membrane. Its subcellular location is the cytoplasm. The protein localises to the perinuclear region. It is found in the cytoplasmic vesicle. Its function is as follows. Calcium-binding protein that interacts with newly synthesized monoglucosylated glycoproteins in the endoplasmic reticulum. It may act in assisting protein assembly and/or in the retention within the ER of unassembled protein subunits. It seems to play a major role in the quality control apparatus of the ER by the retention of incorrectly folded proteins. Required for embryogenesis and larval development under heat and ER stress conditions. May be important for germ cell development. Involved in neuronal necrotic cell death. The chain is Calnexin (cnx-1) from Caenorhabditis elegans.